Consider the following 640-residue polypeptide: tRNA-dihydrouridine(47) synthase [NAD(P)(+)]-like (640 aa).

Polar residues predominate over residues Met1–Asn11. 2 disordered regions span residues Met1 to Asp23 and Phe43 to Phe123. Positions Phe43–Cys57 are enriched in basic and acidic residues. Polar residues predominate over residues Ser58–Glu72. Residues Pro77 to Asp86 show a composition bias toward basic and acidic residues. Over residues Glu104 to His120 the composition is skewed to basic residues. C3H1-type zinc fingers lie at residues Phe123–Ala153 and Glu161–Glu191. FMN-binding positions include Pro301 to Thr303 and Gln355. Cys386 functions as the Proton donor in the catalytic mechanism. Residues Lys425, His455, Asn487 to Asp489, and Ala510 to Arg511 each bind FMN.

This sequence belongs to the Dus family. Dus3 subfamily. Requires FMN as cofactor.

The catalysed reaction is 5,6-dihydrouridine(47) in tRNA + NAD(+) = uridine(47) in tRNA + NADH + H(+). It carries out the reaction 5,6-dihydrouridine(47) in tRNA + NADP(+) = uridine(47) in tRNA + NADPH + H(+). The enzyme catalyses a 5,6-dihydrouridine in mRNA + NAD(+) = a uridine in mRNA + NADH + H(+). It catalyses the reaction a 5,6-dihydrouridine in mRNA + NADP(+) = a uridine in mRNA + NADPH + H(+). Its function is as follows. Catalyzes the synthesis of dihydrouridine, a modified base, in various RNAs, such as tRNAs, mRNAs and some long non-coding RNAs (lncRNAs). Mainly modifies the uridine in position 47 (U47) in the D-loop of most cytoplasmic tRNAs. Also able to mediate the formation of dihydrouridine in some mRNAs, thereby regulating their translation. This is tRNA-dihydrouridine(47) synthase [NAD(P)(+)]-like (dus3l) from Xenopus laevis (African clawed frog).